The sequence spans 29 residues: Small toxic protein TisB (29 aa).

A helical transmembrane segment spans residues 6–28 (IAILILKLIVAALQLLDAVLKYL).

It is found in the cell inner membrane. In terms of biological role, toxic component of a type I toxin-antitoxin (TA) system. Overexpression causes cessation of growth, induces stress-response, a number of membrane protein genes, and leads to cell death. Inhibits ATP synthesis, ATP levels drop drastically quickly after induction. Part of the programmed response to DNA damage; damage leads to increased accumulation of the protein which slows or stops bacterial growth, probably allowing DNA repair before cells continue to grow. This Escherichia coli (strain K12) protein is Small toxic protein TisB (tisB).